Here is a 290-residue protein sequence, read N- to C-terminus: MRDRLPDLTACRKSDDGDNAVIITVEKDHFMDAFFHQVEEIRSSIARIAQHVEDVKKNHSIILSAPNPEGKIKEELEDLNKEIKKTANRIRGKLKAIEQSCDQDENGNRTSVDLRIRRTQHSVLSRKFVDVMTEYNEAQILFRERSKGRIQRQLEITGRTTTDEELEEMLESGKPSIFISDIISDSQITRQALNEIESRHKDIMKLETSIRELHEMFMDMAMFVETQGEMVNNIERNVVNSVDYVEHAKEETKKAIKYQSKARRKKWIIAAVVVAVIAVLALIIGLTVGK.

Residues 1–266 are Cytoplasmic-facing; the sequence is MRDRLPDLTA…KYQSKARRKK (266 aa). A Phosphoserine modification is found at Ser14. Residues 69-106 are a coiled coil; the sequence is EGKIKEELEDLNKEIKKTANRIRGKLKAIEQSCDQDEN. The t-SNARE coiled-coil homology domain occupies 193–255; that stretch reads LNEIESRHKD…EHAKEETKKA (63 aa). Residues 267-290 traverse the membrane as a helical; Anchor for type IV membrane protein segment; it reads WIIAAVVVAVIAVLALIIGLTVGK.

The protein belongs to the syntaxin family. Interacts with SYT6 and SYT8; the interaction is Ca(2+)-dependent. As to expression, heart, spleen, liver, and testis.

It localises to the membrane. Its function is as follows. Essential for epithelial morphogenesis. May mediate Ca(2+)-regulation of exocytosis acrosomal reaction in sperm. The chain is Syntaxin-2 (Stx2) from Rattus norvegicus (Rat).